The primary structure comprises 102 residues: NADH-quinone oxidoreductase subunit K 2 (102 aa).

3 helical membrane passes run 4–24 (ITPV…TVGV), 30–50 (IVII…NLIA), and 62–82 (IFAI…LGIL).

This sequence belongs to the complex I subunit 4L family. In terms of assembly, NDH-1 is composed of 14 different subunits. Subunits NuoA, H, J, K, L, M, N constitute the membrane sector of the complex.

It is found in the cell inner membrane. It carries out the reaction a quinone + NADH + 5 H(+)(in) = a quinol + NAD(+) + 4 H(+)(out). Its function is as follows. NDH-1 shuttles electrons from NADH, via FMN and iron-sulfur (Fe-S) centers, to quinones in the respiratory chain. The immediate electron acceptor for the enzyme in this species is believed to be ubiquinone. Couples the redox reaction to proton translocation (for every two electrons transferred, four hydrogen ions are translocated across the cytoplasmic membrane), and thus conserves the redox energy in a proton gradient. This chain is NADH-quinone oxidoreductase subunit K 2, found in Solibacter usitatus (strain Ellin6076).